Reading from the N-terminus, the 451-residue chain is Heme sensor protein HssS (451 aa).

2 helical membrane passes run 9–29 and 164–184; these read IAIYAITVILFSALMSFLFTN and IFLAVLITLLLIISISLVIAS. Residues 186–238 enclose the HAMP domain; the sequence is YSIIKPVTALKNATTRIMKGDFSTPIKQTRHDEIGTLQSRFNTMRQNLGQVDQ. The Histidine kinase domain occupies 246-451; it reads NVSHEIKTPL…KTQFIVKLFI (206 aa). His-249 is subject to Phosphohistidine; by autocatalysis.

Post-translationally, autophosphorylated.

Its subcellular location is the cell membrane. It carries out the reaction ATP + protein L-histidine = ADP + protein N-phospho-L-histidine.. Member of the two-component regulatory system HssS/HssR involved in intracellular heme homeostasis and tempering of staphylococcal virulence. HssS functions as a heme sensor histidine kinase which is autophosphorylated at a histidine residue and transfers its phosphate group to an aspartate residue of HssR. HssR/HssS activates the expression of HrtAB, an efflux pump, in response to extracellular heme, hemin, hemoglobin or blood. The protein is Heme sensor protein HssS (hssS) of Staphylococcus epidermidis (strain ATCC 12228 / FDA PCI 1200).